The sequence spans 759 residues: RNA-binding protein 28 (759 aa).

Ala-2 carries the N-acetylalanine modification. Residues 4 to 80 enclose the RRM 1 domain; it reads LTLFVGRLPP…CKINVTVAKK (77 aa). The interval 84–105 is disordered; it reads NKTKEKGKNENSECPKKEPKAK. Over residues 85-101 the composition is skewed to basic and acidic residues; that stretch reads KTKEKGKNENSECPKKE. The 78-residue stretch at 114-191 folds into the RRM 2 domain; that stretch reads ARLIIRNLSF…RTVAVDWAVA (78 aa). Ser-122 bears the Phosphoserine mark. Residues 201–330 form a disordered region; the sequence is VSAIGEEKSH…NKKKRKLPSD (130 aa). Basic and acidic residues predominate over residues 205–224; that stretch reads GEEKSHESKHQESVKKKGRE. Composition is skewed to acidic residues over residues 225–256 and 284–313; these read EEDM…EEEN and SEED…EEQE. 2 RRM domains span residues 335–419 and 487–597; these read KTVF…LAVT and TRLC…RSLQ. At Ser-397 the chain carries Phosphoserine. Residues 594–759 are disordered; sequence RSLQKMRSKP…LAKRSKWFDS (166 aa). A compositionally biased stretch (basic and acidic residues) spans 615-640; sequence PAKDQQQKAAQHHTEEQSKVPPEQKR. Lys-653 is covalently cross-linked (Glycyl lysine isopeptide (Lys-Gly) (interchain with G-Cter in SUMO2)). A compositionally biased stretch (basic residues) spans 689–698; that stretch reads VKPVHPKKPK. Positions 700–715 are enriched in polar residues; sequence QINQWKQEKQQLSSEQ.

As to quaternary structure, interacts with U1, U2, U4, U5, and U6 spliceosomal small nuclear RNAs (snRNAs). As to expression, ubiquitously expressed.

Its subcellular location is the nucleus. It is found in the nucleolus. Its function is as follows. Nucleolar component of the spliceosomal ribonucleoprotein complexes. The sequence is that of RNA-binding protein 28 (RBM28) from Homo sapiens (Human).